The chain runs to 388 residues: Gastricsin (388 aa).

Residues 1-16 (MKWMVVVLVCLQLLEA) form the signal peptide. The propeptide at 17 to 59 (AVVKVPLKKFKSIRETMKEKGLLGEFLRTHKYDPAWKYRFGDL) is activation peptide. The Peptidase A1 domain maps to 73 to 385 (YFGEISIGTP…DLGNNRVGFA (313 aa)). The active site involves Asp-91. 2 disulfide bridges follow: Cys-104/Cys-109 and Cys-267/Cys-271. Residue Asp-276 is part of the active site. Cys-310 and Cys-343 are disulfide-bonded.

The protein belongs to the peptidase A1 family.

The protein resides in the secreted. It catalyses the reaction More restricted specificity than pepsin A, but shows preferential cleavage at Tyr-|-Xaa bonds. High activity on hemoglobin.. Hydrolyzes a variety of proteins. This chain is Gastricsin (PGC), found in Homo sapiens (Human).